Here is a 321-residue protein sequence, read N- to C-terminus: Biotin synthase (321 aa).

The region spanning phenylalanine 44 to arginine 273 is the Radical SAM core domain. Cysteine 62, cysteine 66, and cysteine 69 together coordinate [4Fe-4S] cluster. Residues serine 106, cysteine 138, cysteine 198, and arginine 268 each contribute to the [2Fe-2S] cluster site.

Belongs to the radical SAM superfamily. Biotin synthase family. In terms of assembly, homodimer. [4Fe-4S] cluster serves as cofactor. Requires [2Fe-2S] cluster as cofactor.

The enzyme catalyses (4R,5S)-dethiobiotin + (sulfur carrier)-SH + 2 reduced [2Fe-2S]-[ferredoxin] + 2 S-adenosyl-L-methionine = (sulfur carrier)-H + biotin + 2 5'-deoxyadenosine + 2 L-methionine + 2 oxidized [2Fe-2S]-[ferredoxin]. It participates in cofactor biosynthesis; biotin biosynthesis; biotin from 7,8-diaminononanoate: step 2/2. Its function is as follows. Catalyzes the conversion of dethiobiotin (DTB) to biotin by the insertion of a sulfur atom into dethiobiotin via a radical-based mechanism. The chain is Biotin synthase from Akkermansia muciniphila (strain ATCC BAA-835 / DSM 22959 / JCM 33894 / BCRC 81048 / CCUG 64013 / CIP 107961 / Muc).